The primary structure comprises 107 residues: MKWVVIDTVIQPTCGISFSAIWGDMKKIIWYQSTIFLPPGSIFTPVKLGIILKEKEYPITIYNIAPFNKNLWSLLKSSQECPPGESKITNKCLHNSCIIKICPYGLK.

Belongs to the IraM/RssC family.

It is found in the cytoplasm. Functionally, inhibits RpoS proteolysis by regulating RssB activity, thereby increasing the stability of the sigma stress factor RpoS during magnesium starvation. The protein is Anti-adapter protein IraM of Shigella sonnei (strain Ss046).